The primary structure comprises 314 residues: Epithelial cell adhesion molecule (314 aa).

The first 23 residues, 1-23, serve as a signal peptide directing secretion; the sequence is MAPPQVLAFGLLLAAATATFAAA. Residues 24 to 265 are Extracellular-facing; it reads QEECVCENYK…APEFSMQGLK (242 aa). 6 disulfides stabilise this stretch: Cys-27–Cys-46, Cys-29–Cys-59, Cys-38–Cys-48, Cys-66–Cys-99, Cys-110–Cys-116, and Cys-118–Cys-135. Residues 63–135 enclose the Thyroglobulin type-1 domain; that stretch reads AAKCLVMKAE…RTDKDTEITC (73 aa). A glycan (N-linked (GlcNAc...) asparagine; partial) is linked at Asn-74. Asn-111 carries N-linked (GlcNAc...) asparagine glycosylation. Asn-198 carries an N-linked (GlcNAc...) asparagine glycan. A helical membrane pass occupies residues 266–288; sequence AGVIAVIVVVVIAVVAGIVVLVI. At 289–314 the chain is on the cytoplasmic side; it reads SRKKRMAKYEKAEIKEMGEMHRELNA.

The protein belongs to the EPCAM family. In terms of assembly, monomer. Interacts with phosphorylated CLDN7. In terms of processing, hyperglycosylated in carcinoma tissue as compared with autologous normal epithelia. Glycosylation at Asn-198 is crucial for protein stability. In terms of tissue distribution, highly and selectively expressed by undifferentiated rather than differentiated embryonic stem cells (ESC). Levels rapidly diminish as soon as ESC's differentiate (at protein levels). Expressed in almost all epithelial cell membranes but not on mesodermal or neural cell membranes. Found on the surface of adenocarcinoma.

Its subcellular location is the lateral cell membrane. The protein resides in the cell junction. The protein localises to the tight junction. Functionally, may act as a physical homophilic interaction molecule between intestinal epithelial cells (IECs) and intraepithelial lymphocytes (IELs) at the mucosal epithelium for providing immunological barrier as a first line of defense against mucosal infection. Plays a role in embryonic stem cells proliferation and differentiation. Up-regulates the expression of FABP5, MYC and cyclins A and E. In Homo sapiens (Human), this protein is Epithelial cell adhesion molecule (EPCAM).